The chain runs to 148 residues: Putative nickel-responsive regulator (148 aa).

Ni(2+)-binding residues include H88, H99, H101, and C107.

This sequence belongs to the transcriptional regulatory CopG/NikR family. Ni(2+) serves as cofactor.

Its function is as follows. Transcriptional regulator. This is Putative nickel-responsive regulator from Helicobacter pylori (strain P12).